Here is a 416-residue protein sequence, read N- to C-terminus: Cysteate synthase (416 aa).

Lys-104 carries the post-translational modification N6-(pyridoxal phosphate)lysine. Position 130 (Asn-130) interacts with pyridoxal 5'-phosphate.

It belongs to the threonine synthase family. Cysteate synthase subfamily. As to quaternary structure, homotrimer. The cofactor is pyridoxal 5'-phosphate.

It catalyses the reaction O-phospho-L-serine + sulfite + H(+) = L-cysteate + phosphate. It participates in cofactor biosynthesis; coenzyme M biosynthesis. Functionally, specifically catalyzes the beta-elimination of phosphate from L-phosphoserine and the beta-addition of sulfite to the dehydroalanine intermediate to produce L-cysteate. This chain is Cysteate synthase, found in Methanosarcina mazei (strain ATCC BAA-159 / DSM 3647 / Goe1 / Go1 / JCM 11833 / OCM 88) (Methanosarcina frisia).